A 170-amino-acid polypeptide reads, in one-letter code: UPF0251 protein MA_1017 (170 aa).

The protein belongs to the UPF0251 family.

The protein is UPF0251 protein MA_1017 of Methanosarcina acetivorans (strain ATCC 35395 / DSM 2834 / JCM 12185 / C2A).